The following is a 376-amino-acid chain: Enoyl-[acyl-carrier-protein] reductase, mitochondrial (376 aa).

The N-terminal 12 residues, 1-12 (MLRTLRTSQLAR), are a transit peptide targeting the mitochondrion. Y79 (proton donor) is an active-site residue. Residues N160, 183-186 (NSGV), 206-208 (RDR), 277-280 (YGGM), 302-304 (YWL), and K368 contribute to the NADP(+) site.

Belongs to the zinc-containing alcohol dehydrogenase family. Quinone oxidoreductase subfamily. Homodimer.

The protein localises to the mitochondrion matrix. The catalysed reaction is a 2,3-saturated acyl-[ACP] + NADP(+) = a (2E)-enoyl-[ACP] + NADPH + H(+). In terms of biological role, catalyzes the NADPH-dependent reduction of trans-2-enoyl thioesters in mitochondrial fatty acid synthesis (fatty acid synthesis type II). Fatty acid chain elongation in mitochondria uses acyl carrier protein (ACP) as an acyl group carrier, but the enzyme accepts both ACP and CoA thioesters as substrates in vitro. Required for respiration and the maintenance of the mitochondrial compartment. The sequence is that of Enoyl-[acyl-carrier-protein] reductase, mitochondrial (ETR1) from Yarrowia lipolytica (strain CLIB 122 / E 150) (Yeast).